The following is a 228-amino-acid chain: Vacuolar-sorting protein snf7 (228 aa).

2 coiled-coil regions span residues 25–94 (ILGL…QINA) and 125–226 (EKVD…QAEM).

Belongs to the SNF7 family. A component of the endosomal sorting required for transport complex III (ESCRT-III).

Its subcellular location is the cytoplasm. It localises to the endosome membrane. In terms of biological role, required for the sorting and concentration of proteins resulting in the entry of these proteins into the invaginating vesicles of the multivesicular body (MVB). Also required for the proteolytic cleavage of the transcription factor pacc-1 in response to alkaline ambient pH. This Neurospora crassa (strain ATCC 24698 / 74-OR23-1A / CBS 708.71 / DSM 1257 / FGSC 987) protein is Vacuolar-sorting protein snf7 (vsp-3).